We begin with the raw amino-acid sequence, 33 residues long: Photosystem II reaction center protein Psb30 (33 aa).

A helical transmembrane segment spans residues Val5 to Leu25.

The protein belongs to the Psb30/Ycf12 family. PSII is composed of 1 copy each of membrane proteins PsbA, PsbB, PsbC, PsbD, PsbE, PsbF, PsbH, PsbI, PsbJ, PsbK, PsbL, PsbM, PsbT, PsbX, PsbY, PsbZ, Psb30/Ycf12, peripheral proteins of the oxygen-evolving complex and a large number of cofactors. It forms dimeric complexes.

Its subcellular location is the plastid. The protein resides in the chloroplast thylakoid membrane. Its function is as follows. A core subunit of photosystem II (PSII), probably helps stabilize the reaction center. The sequence is that of Photosystem II reaction center protein Psb30 from Cycas taitungensis (Prince sago).